The primary structure comprises 376 residues: Metal tolerance protein 6 (376 aa).

The disordered stretch occupies residues 1–28 (MAAAAGVAAGTGRGSGEGEELLPNAVEG). Over 1–123 (MAAAAGVAAG…CEKVARSEAL (123 aa)) the chain is Cytoplasmic. A helical transmembrane segment spans residues 124 to 144 (AIRLSNIANMVLFAAKVYASI). Over 145-149 (RSGSL) the chain is Vacuolar. A helical transmembrane segment spans residues 150-170 (AIIASTLDSLLDLLSGFILWF). Residues 171–191 (TAFSKKTSNPYRYPIGKRRMQ) are Cytoplasmic-facing. A helical membrane pass occupies residues 192 to 212 (PLGILVFASVMATLGLQIILE). Over 213-231 (STRSLFYDGDTFRLTKEQE) the chain is Vacuolar. A helical membrane pass occupies residues 232 to 252 (KWVVDIMLSVTSVKLLLVVYC). Residues 253-376 (RSFTNEILAI…PEHARSHDTL (124 aa)) lie on the Cytoplasmic side of the membrane.

This sequence belongs to the cation diffusion facilitator (CDF) transporter (TC 2.A.4) family. SLC30A subfamily.

It is found in the vacuole membrane. In terms of biological role, involved in sequestration of excess metal in the cytoplasm into vacuoles to maintain metal homeostasis. This Oryza sativa subsp. japonica (Rice) protein is Metal tolerance protein 6 (MTP6).